Reading from the N-terminus, the 684-residue chain is Cleavage and polyadenylation specificity factor 73 (684 aa).

Zn(2+) contacts are provided by H77, H79, D81, H82, H164, and D185. H402 acts as the Proton donor in catalysis. H424 provides a ligand contact to Zn(2+).

This sequence belongs to the metallo-beta-lactamase superfamily. RNA-metabolizing metallo-beta-lactamase-like family. CPSF3 subfamily. In terms of assembly, component of the cleavage and polyadenylation specificity factor (CPSF) complex, composed of at least Clp, Cpsf73, Cpsf100 and Cpsf160. Interacts with Sym and Cpsf100 forming a core cleavage factor required for both polyadenylated and histone mRNA processing. Interacts with Slbp and Lsm11. Requires Zn(2+) as cofactor.

It is found in the nucleus. Its function is as follows. Component of the cleavage and polyadenylation specificity factor (CPSF) complex that plays a key role in pre-mRNA 3'-end formation, recognizing the AAUAAA signal sequence and interacting with poly(A) polymerase and other factors to bring about cleavage and poly(A) addition. Has endonuclease activity and functions as an mRNA 3'-end-processing endonuclease. Required for the cotranscriptional processing of 3'-ends of polyadenylated and histone pre-mRNA. This Drosophila melanogaster (Fruit fly) protein is Cleavage and polyadenylation specificity factor 73 (Cpsf73).